Consider the following 307-residue polypeptide: Ribosomal RNA small subunit methyltransferase H (307 aa).

S-adenosyl-L-methionine contacts are provided by residues 33 to 35 (GGY), D51, F82, D96, and Q103.

This sequence belongs to the methyltransferase superfamily. RsmH family.

It is found in the cytoplasm. It catalyses the reaction cytidine(1402) in 16S rRNA + S-adenosyl-L-methionine = N(4)-methylcytidine(1402) in 16S rRNA + S-adenosyl-L-homocysteine + H(+). Functionally, specifically methylates the N4 position of cytidine in position 1402 (C1402) of 16S rRNA. This is Ribosomal RNA small subunit methyltransferase H from Rickettsia africae (strain ESF-5).